The chain runs to 360 residues: POU domain, class 5, transcription factor 1 (360 aa).

Disordered regions lie at residues 1-48 and 86-137; these read MAGH…SGIG and PPGG…EESQ. Positions 4–12 match the 9aaTAD motif; sequence HLASDFAFS. Serine 111 carries the post-translational modification Phosphoserine; by MAPK. Lysine 123 participates in a covalent cross-link: Glycyl lysine isopeptide (Lys-Gly) (interchain with G-Cter in SUMO). Over residues 123–137 the composition is skewed to basic and acidic residues; it reads KLDKEKLEPNPEESQ. The POU-specific domain maps to 138 to 212; that stretch reads DIKALQKDLE…LLQKWVEEAD (75 aa). DNA-binding residues include arginine 157 and glutamine 164. DNA-binding regions lie at residues 180–186 and 193–196; these read SQTTICR and SFKN. Positions 230–289 form a DNA-binding region, homeobox; it reads RKRKRTSIENRVRGNLESMFLQCPKPTLQQISHIAQQLGLEKDVVRVWFCNRRQKGKRSS. At threonine 235 the chain carries Phosphothreonine. 4 positions are modified to phosphoserine: serine 236, serine 289, serine 290, and serine 355. The segment at 287 to 322 is disordered; that stretch reads RSSSDYSQREDFEAAGSPFTGGPVSSPLAPGPHFGT.

Belongs to the POU transcription factor family. Class-5 subfamily. As to quaternary structure, interacts with PKM. Interacts with WWP2. Interacts with UBE2I and ZSCAN10. Interacts with PCGF1. Interacts with ESRRB; recruits ESRRB near the POU5F1-SOX2 element in the NANOG proximal promoter; the interaction is DNA independent. Interacts with MAPK8 and MAPK9; the interaction allows MAPK8 and MAPK9 to phosphorylate POU5F1 on Ser-355. Interacts (when phosphorylated on Ser-355) with FBXW8. Interacts with FBXW4. Interacts with SOX2 and SOX15; binds synergistically with either SOX2 or SOX15 to DNA. Interacts with DDX56. Post-translationally, sumoylation enhances the protein stability, DNA binding and transactivation activity. Sumoylation is required for enhanced YES1 expression. In terms of processing, ubiquitinated; undergoes 'Lys-63'-linked polyubiquitination by WWP2 leading to proteasomal degradation. ERK1/2-mediated phosphorylation at Ser-111 promotes nuclear exclusion and proteasomal degradation. Phosphorylation at Thr-235 and Ser-236 decrease DNA-binding and alters ability to activate transcription. Expressed in immature oocytes.

It localises to the cytoplasm. The protein resides in the nucleus. Its function is as follows. Transcription factor that binds to the octamer motif (5'-ATTTGCAT-3'). Forms a trimeric complex with SOX2 or SOX15 on DNA and controls the expression of a number of genes involved in embryonic development such as YES1, FGF4, UTF1 and ZFP206. Critical for early embryogenesis and for embryonic stem cell pluripotency. This is POU domain, class 5, transcription factor 1 (POU5F1) from Bos taurus (Bovine).